Here is a 714-residue protein sequence, read N- to C-terminus: Fatty acid oxidation complex subunit alpha (714 aa).

The interval 1–190 (MEMASAFTLN…KLGLVDDVVP (190 aa)) is enoyl-CoA hydratase. Positions 306–714 (APLNSVGILG…FWKTTATDLQ (409 aa)) are 3-hydroxyacyl-CoA dehydrogenase.

The protein in the N-terminal section; belongs to the enoyl-CoA hydratase/isomerase family. It in the central section; belongs to the 3-hydroxyacyl-CoA dehydrogenase family. In terms of assembly, heterotetramer of two alpha chains (FadJ) and two beta chains (FadI).

Its subcellular location is the cytoplasm. The catalysed reaction is a (3S)-3-hydroxyacyl-CoA = a (2E)-enoyl-CoA + H2O. It catalyses the reaction a 4-saturated-(3S)-3-hydroxyacyl-CoA = a (3E)-enoyl-CoA + H2O. It carries out the reaction a (3S)-3-hydroxyacyl-CoA + NAD(+) = a 3-oxoacyl-CoA + NADH + H(+). The enzyme catalyses (3S)-3-hydroxybutanoyl-CoA = (3R)-3-hydroxybutanoyl-CoA. The protein operates within lipid metabolism; fatty acid beta-oxidation. Functionally, catalyzes the formation of a hydroxyacyl-CoA by addition of water on enoyl-CoA. Also exhibits 3-hydroxyacyl-CoA epimerase and 3-hydroxyacyl-CoA dehydrogenase activities. The sequence is that of Fatty acid oxidation complex subunit alpha from Escherichia coli O7:K1 (strain IAI39 / ExPEC).